The primary structure comprises 507 residues: Histidine ammonia-lyase (507 aa).

The 5-imidazolinone (Ala-Gly) cross-link spans 141-143; it reads ASG. 2,3-didehydroalanine (Ser) is present on S142.

The protein belongs to the PAL/histidase family. Contains an active site 4-methylidene-imidazol-5-one (MIO), which is formed autocatalytically by cyclization and dehydration of residues Ala-Ser-Gly.

It is found in the cytoplasm. It catalyses the reaction L-histidine = trans-urocanate + NH4(+). Its pathway is amino-acid degradation; L-histidine degradation into L-glutamate; N-formimidoyl-L-glutamate from L-histidine: step 1/3. In Burkholderia ambifaria (strain MC40-6), this protein is Histidine ammonia-lyase.